We begin with the raw amino-acid sequence, 271 residues long: Cobalt import ATP-binding protein CbiO (271 aa).

The 235-residue stretch at 2–236 folds into the ABC transporter domain; it reads LATSDLWFRY…TEAMEHAGLT (235 aa). 34 to 41 contributes to the ATP binding site; sequence GANGCGKS.

It belongs to the ABC transporter superfamily. Cobalt importer (TC 3.A.1.18.1) family. Forms an energy-coupling factor (ECF) transporter complex composed of an ATP-binding protein (A component, CbiO), a transmembrane protein (T component, CbiQ) and 2 possible substrate-capture proteins (S components, CbiM and CbiN) of unknown stoichimetry.

Its subcellular location is the cell inner membrane. It participates in cofactor biosynthesis; adenosylcobalamin biosynthesis. In terms of biological role, part of the energy-coupling factor (ECF) transporter complex CbiMNOQ involved in cobalt import. Presumably responsible for energy coupling to the transport system. The polypeptide is Cobalt import ATP-binding protein CbiO (Salmonella paratyphi A (strain ATCC 9150 / SARB42)).